The primary structure comprises 445 residues: Cytoplasmic tRNA 2-thiolation protein 2 (445 aa).

The span at 1–11 (MCSIGEDDFGD) shows a compositional bias: acidic residues. The interval 1-26 (MCSIGEDDFGDEGGVHAMKEESPLPE) is disordered. Basic and acidic residues predominate over residues 13 to 22 (GGVHAMKEES).

This sequence belongs to the CTU2/NCS2 family.

Its subcellular location is the cytoplasm. Its pathway is tRNA modification; 5-methoxycarbonylmethyl-2-thiouridine-tRNA biosynthesis. Functionally, plays a central role in 2-thiolation of mcm(5)S(2)U at tRNA wobble positions of tRNA(Lys), tRNA(Glu) and tRNA(Gln). May act by forming a heterodimer with NCS6/CTU1 that ligates sulfur from thiocarboxylated URM1 onto the uridine of tRNAs at wobble position. The protein is Cytoplasmic tRNA 2-thiolation protein 2 of Aedes aegypti (Yellowfever mosquito).